We begin with the raw amino-acid sequence, 1044 residues long: Integrin alpha-8 (1044 aa).

A signal peptide spans 1–23; that stretch reads MPRRQPPRPLLLLSALLCAPASA. Topologically, residues 24–991 are extracellular; sequence FNLDEEKLTV…WSTPNVSFVI (968 aa). FG-GAP repeat units follow at residues 28–90, 104–165, 170–222, 236–288, 289–354, 355–413, and 417–480; these read EEKL…RCRQ, NGTR…AYAE, RNSN…ITNY, QTGV…SSDL, TFIQ…FLFR, DPQI…GLKT, and QVLN…LNPM. Asn66 carries N-linked (GlcNAc...) asparagine glycosylation. Cys81 and Cys88 are joined by a disulfide. The N-linked (GlcNAc...) asparagine glycan is linked to Asn104. Residues Cys132 and Cys153 are joined by a disulfide bond. Asn159 carries an N-linked (GlcNAc...) asparagine glycan. An intrachain disulfide couples Cys169 to Cys182. Asn221 carries an N-linked (GlcNAc...) asparagine glycan. The Ca(2+) site is built by Glu257, Thr259, Asp261, and Glu265. Asn284 and Asn293 each carry an N-linked (GlcNAc...) asparagine glycan. Ca(2+) is bound by residues Asp311, Asn313, Asp315, Leu317, Asp319, Asp377, Asn379, Asp381, Tyr383, and Asp385. Positions 437 to 439 match the Cell attachment site motif; the sequence is RGD. The Ca(2+) site is built by Asp441, Asp443, Asn445, Tyr447, and Asp449. N-linked (GlcNAc...) asparagine glycosylation is present at Asn486. 2 cysteine pairs are disulfide-bonded: Cys489-Cys500 and Cys506-Cys562. Residue Asn587 is glycosylated (N-linked (GlcNAc...) asparagine). 2 disulfides stabilise this stretch: Cys623-Cys629 and Cys695-Cys708. 7 N-linked (GlcNAc...) asparagine glycosylation sites follow: Asn701, Asn719, Asn751, Asn762, Asn818, Asn877, and Asn904. 2 disulfides stabilise this stretch: Cys849-Cys905 and Cys910-Cys915. N-linked (GlcNAc...) asparagine glycans are attached at residues Asn952 and Asn986. A helical transmembrane segment spans residues 992–1015; it reads PLWVIILAIMLGLLVLAVLTLALW. The Cytoplasmic portion of the chain corresponds to 1016-1044; the sequence is KCGFFDRARPPQDDMADREQLTNNKTTDA.

Belongs to the integrin alpha chain family. In terms of assembly, heterodimer of an alpha and a beta subunit. The alpha subunit is composed of a heavy and a light chain linked by a disulfide bond. Alpha-8 associates with beta-1. Prominently expressed on axons and on cells in contact with basal laminae in embryos.

Its subcellular location is the membrane. The protein resides in the cell membrane. In terms of biological role, integrin alpha-8/beta-1 functions in the genesis of kidney and probably of other organs by regulating the recruitment of mesenchymal cells into epithelial structures. It recognizes the sequence R-G-D in a wide array of ligands including TNC, FN1, SPP1, TGFB1, TGFB3 and VTN. NPNT is probably its functional ligand in kidney genesis. Neuronal receptor for TNC it mediates cell-cell interactions and regulates neurite outgrowth of sensory and motor neurons. The protein is Integrin alpha-8 (ITGA8) of Gallus gallus (Chicken).